The chain runs to 251 residues: Putative glutathione-independent glyoxalase hsp3105 (251 aa).

This sequence belongs to the peptidase C56 family. HSP31-like subfamily.

Its subcellular location is the cytoplasm. It localises to the nucleus. The enzyme catalyses methylglyoxal + H2O = (R)-lactate + H(+). In terms of biological role, may catalyze the conversion of methylglyoxal (MG) to D-lactate in a single glutathione (GSH)-independent step. May play a role in detoxifying endogenously produced glyoxals. Involved in protection against reactive oxygen species (ROS). This Schizosaccharomyces pombe (strain 972 / ATCC 24843) (Fission yeast) protein is Putative glutathione-independent glyoxalase hsp3105.